The sequence spans 178 residues: Ribosome maturation factor RimP (178 aa).

This sequence belongs to the RimP family.

The protein localises to the cytoplasm. Required for maturation of 30S ribosomal subunits. This chain is Ribosome maturation factor RimP, found in Mycolicibacterium paratuberculosis (strain ATCC BAA-968 / K-10) (Mycobacterium paratuberculosis).